The primary structure comprises 520 residues: GMP synthase [glutamine-hydrolyzing] (520 aa).

The region spanning threonine 9–aspartate 202 is the Glutamine amidotransferase type-1 domain. The active-site Nucleophile is the cysteine 86. Catalysis depends on residues histidine 176 and glutamate 178. The 193-residue stretch at tryptophan 203–arginine 395 folds into the GMPS ATP-PPase domain. ATP is bound at residue serine 230–serine 236.

Homodimer.

The catalysed reaction is XMP + L-glutamine + ATP + H2O = GMP + L-glutamate + AMP + diphosphate + 2 H(+). It functions in the pathway purine metabolism; GMP biosynthesis; GMP from XMP (L-Gln route): step 1/1. In terms of biological role, catalyzes the synthesis of GMP from XMP. The polypeptide is GMP synthase [glutamine-hydrolyzing] (Sinorhizobium fredii (strain NBRC 101917 / NGR234)).